The following is a 362-amino-acid chain: MERITVTLGERSYPITIAAGLFNEPASFLPLKSGDQVMLVTNETLAPLYLDKIRSVLEQAGVNVDSVTLPDGEKYKSLTVLDTVFTALLQKPHGRDTTLVALGGGVIGDLTGFAAASYQRGVRFIQVPTTLLSQVDSSVGGKTAVNHPLGKNMIGAFYQPASVVVDLDCLKTLPARELASGLAEVIKYGIILDGEFFTWLEDNLDALLRLEGPAMAYCIRRCCELKAEVVAADERETGLRALLNLGHTFGHAIEAEMGYGNWLHGEAVAAGMVMAARTSERLGQFSAADTQRIITLLQRAGLPVHGPREMSAQAYLPHMLRDKKVLAGEMRLVLPLAIGKSEVRGGVPHEIVLSAIADCQQA.

Residues 71 to 76 (DGEKYK), 105 to 109 (GVIGD), 129 to 130 (TT), lysine 142, lysine 151, and 169 to 172 (CLKT) contribute to the NAD(+) site. Residues glutamate 184, histidine 247, and histidine 264 each contribute to the Zn(2+) site.

Belongs to the sugar phosphate cyclases superfamily. Dehydroquinate synthase family. It depends on Co(2+) as a cofactor. The cofactor is Zn(2+). NAD(+) serves as cofactor.

The protein localises to the cytoplasm. It carries out the reaction 7-phospho-2-dehydro-3-deoxy-D-arabino-heptonate = 3-dehydroquinate + phosphate. The protein operates within metabolic intermediate biosynthesis; chorismate biosynthesis; chorismate from D-erythrose 4-phosphate and phosphoenolpyruvate: step 2/7. Functionally, catalyzes the conversion of 3-deoxy-D-arabino-heptulosonate 7-phosphate (DAHP) to dehydroquinate (DHQ). This Citrobacter koseri (strain ATCC BAA-895 / CDC 4225-83 / SGSC4696) protein is 3-dehydroquinate synthase.